Consider the following 512-residue polypeptide: 2,3-bisphosphoglycerate-independent phosphoglycerate mutase (512 aa).

Mn(2+) is bound by residues Asp-12 and Ser-62. Residue Ser-62 is the Phosphoserine intermediate of the active site. Residues His-123, 154-155, Arg-181, Arg-187, 253-256, and Lys-336 each bind substrate; these read RD and RPDR. Mn(2+) contacts are provided by Asp-403, His-407, Asp-444, His-445, and His-462.

It belongs to the BPG-independent phosphoglycerate mutase family. Monomer. Requires Mn(2+) as cofactor.

The catalysed reaction is (2R)-2-phosphoglycerate = (2R)-3-phosphoglycerate. It functions in the pathway carbohydrate degradation; glycolysis; pyruvate from D-glyceraldehyde 3-phosphate: step 3/5. Its function is as follows. Catalyzes the interconversion of 2-phosphoglycerate and 3-phosphoglycerate. The chain is 2,3-bisphosphoglycerate-independent phosphoglycerate mutase from Onion yellows phytoplasma (strain OY-M).